The primary structure comprises 354 residues: MEKYLIKMPIKSKASEVPKDKAVVKQGTPKIRSKVTKNDTPKELKNKENAGEDNTPKQTNGRLGRPAGKRKNLDTPETKAEKIATEEENPPKRRSSRLTRSTRSMAEDGSPSPEKEKPEKLPFIKYKGAIKYYTESQDIAASADDVLQWVEKQKDEVVPMAFDMEWPFSFQTGPGKSAVIQICVDEKCCYIYQLTNLKKLPAVLVALINHSKVRLHGVNIKNDFRKLARDFPEVSAEPLIEKCVDLGVWCNEVCETGGRWSLERLTNFIAKKAMDKSKKVRMSKWHVIPLDENQLMYAAIDVYIGQVIYRELERREKAKIINEEEFKEKNGEAAFKAMKTLGETFLSKINEVTL.

Residues 1–120 form a disordered region; the sequence is MEKYLIKMPI…PSPEKEKPEK (120 aa). 3 stretches are compositionally biased toward basic and acidic residues: residues 13–23, 36–50, and 71–91; these read KASEVPKDKAV, TKND…KENA, and KNLD…ENPP. Phosphoserine occurs at positions 104, 110, and 112. Positions 146–314 constitute a 3'-5' exonuclease domain; the sequence is VLQWVEKQKD…GQVIYRELER (169 aa). Residues D163, E165, and D301 each coordinate Mg(2+).

The protein belongs to the WRNexo family.

It localises to the nucleus. Its function is as follows. Has exonuclease activity on both single-stranded and duplex templates bearing overhangs, but not blunt ended duplex DNA, and cleaves in a 3'-5' direction. Essential for the formation of DNA replication focal centers. Has an important role in maintaining genome stability. This chain is 3'-5' exonuclease, found in Drosophila erecta (Fruit fly).